Here is a 205-residue protein sequence, read N- to C-terminus: Dr1-associated corepressor (205 aa).

Positions 14-77 (PARIKKIMQT…SHLKQCIELE (64 aa)) constitute a Histone-fold domain. Residues 91 to 205 (PDMQGDGEDN…EAEDEEDYDS (115 aa)) are disordered. The segment covering 98–108 (EDNHTDGDKGP) has biased composition (basic and acidic residues). Positions 138-155 (SEQEDESEDTDTDGEEET) are enriched in acidic residues. Positions 172–193 (PPTPFMPFTSPLPLPPAPPGPS) are enriched in pro residues. Over residues 196-205 (EAEDEEDYDS) the composition is skewed to acidic residues.

The protein belongs to the NC2 alpha/DRAP1 family. In terms of assembly, heterodimer with DR1. Binds BTAF1. In terms of processing, phosphorylation reduces DNA binding, but has no effect on heterodimerization and TBP binding.

The protein resides in the nucleus. In terms of biological role, the association of the DR1/DRAP1 heterodimer with TBP results in a functional repression of both activated and basal transcription of class II genes. This interaction precludes the formation of a transcription-competent complex by inhibiting the association of TFIIA and/or TFIIB with TBP. Can bind to DNA on its own. This chain is Dr1-associated corepressor, found in Rattus norvegicus (Rat).